The primary structure comprises 218 residues: ATP phosphoribosyltransferase (218 aa).

This sequence belongs to the ATP phosphoribosyltransferase family. Short subfamily. As to quaternary structure, heteromultimer composed of HisG and HisZ subunits.

Its subcellular location is the cytoplasm. The catalysed reaction is 1-(5-phospho-beta-D-ribosyl)-ATP + diphosphate = 5-phospho-alpha-D-ribose 1-diphosphate + ATP. Its pathway is amino-acid biosynthesis; L-histidine biosynthesis; L-histidine from 5-phospho-alpha-D-ribose 1-diphosphate: step 1/9. In terms of biological role, catalyzes the condensation of ATP and 5-phosphoribose 1-diphosphate to form N'-(5'-phosphoribosyl)-ATP (PR-ATP). Has a crucial role in the pathway because the rate of histidine biosynthesis seems to be controlled primarily by regulation of HisG enzymatic activity. This chain is ATP phosphoribosyltransferase, found in Lactiplantibacillus plantarum (strain ATCC BAA-793 / NCIMB 8826 / WCFS1) (Lactobacillus plantarum).